A 155-amino-acid chain; its full sequence is Large ribosomal subunit protein uL22 (155 aa).

The protein belongs to the universal ribosomal protein uL22 family. As to quaternary structure, part of the 50S ribosomal subunit. Contacts the macrolide antibiotic tylosin in the polypeptide exit tunnel.

Its function is as follows. This protein binds specifically to 23S rRNA. It makes multiple contacts with different domains of the 23S rRNA in the assembled 50S subunit and ribosome. Contacts all 6 domains of the 23S rRNA, helping stabilize their relative orientation. An extended beta-hairpin in the C-terminus forms part of the polypeptide exit tunnel, in which it helps forms a bend with protein L4, while most of the rest of the protein is located at the polypeptide exit tunnel on the outside of the subunit. This is Large ribosomal subunit protein uL22 from Haloarcula marismortui (strain ATCC 43049 / DSM 3752 / JCM 8966 / VKM B-1809) (Halobacterium marismortui).